Here is a 479-residue protein sequence, read N- to C-terminus: NADH-quinone oxidoreductase subunit N 2 (479 aa).

The next 14 helical transmembrane spans lie at 9–29 (WALA…LLIV), 40–60 (LLLW…LMLA), 75–95 (RFAV…FFLS), 110–130 (YVLL…IDLL), 131–151 (SIYV…GFLR), 164–184 (VILG…IYGL), 206–226 (LLLA…AVPF), 238–258 (PTTI…AVIL), 272–292 (WIIV…VALV), 299–319 (LLAY…VAGG), 326–346 (VMLY…AVIM), 371–391 (ALLM…AGFF), 404–424 (GFVA…YFYI), and 449–469 (ATLA…AWFL).

Belongs to the complex I subunit 2 family. NDH-1 is composed of 14 different subunits. Subunits NuoA, H, J, K, L, M, N constitute the membrane sector of the complex.

The protein localises to the cell inner membrane. The catalysed reaction is a quinone + NADH + 5 H(+)(in) = a quinol + NAD(+) + 4 H(+)(out). Its function is as follows. NDH-1 shuttles electrons from NADH, via FMN and iron-sulfur (Fe-S) centers, to quinones in the respiratory chain. The immediate electron acceptor for the enzyme in this species is believed to be ubiquinone. Couples the redox reaction to proton translocation (for every two electrons transferred, four hydrogen ions are translocated across the cytoplasmic membrane), and thus conserves the redox energy in a proton gradient. The sequence is that of NADH-quinone oxidoreductase subunit N 2 from Rhizobium meliloti (strain 1021) (Ensifer meliloti).